The primary structure comprises 122 residues: Large ribosomal subunit protein uL14c (122 aa).

Belongs to the universal ribosomal protein uL14 family. In terms of assembly, part of the 50S ribosomal subunit.

It localises to the plastid. The protein resides in the chloroplast. Functionally, binds to 23S rRNA. The chain is Large ribosomal subunit protein uL14c from Welwitschia mirabilis (Tree tumbo).